Consider the following 199-residue polypeptide: Phosphatidylethanolamine N-methyltransferase (199 aa).

The Lumenal segment spans residues 1-12; that stretch reads MTRLLGYVDPLD. An intramembrane region (helical) is located at residues 13 to 33; it reads PSFVAAVITITFNPLYWNVVA. Residues 34–45 are Lumenal-facing; the sequence is RWEHKTRKLSRA. The chain crosses the membrane as a helical span at residues 46-66; that stretch reads FGSPYLACYSLSVTILLLNFL. Over 67-93 the chain is Cytoplasmic; it reads RSHCFTQAMLSQPRMESLDTPAAYSLG. The helical transmembrane segment at 94 to 114 threads the bilayer; the sequence is LALLGLGVVLVLSSFFALGFA. 98-100 provides a ligand contact to S-adenosyl-L-methionine; that stretch reads GLG. The Lumenal segment spans residues 115 to 157; that stretch reads GTFLGDYFGILKEARVTVFPFNILDNPMYWGSTANYLGWAIMH. Residues 158–178 form a helical membrane-spanning segment; that stretch reads ASPTGLLLTVLVALTYIVALL. At 179–199 the chain is on the cytoplasmic side; the sequence is YEEPFTAEIYRQKASGSHKRS. 180–181 provides a ligand contact to S-adenosyl-L-methionine; the sequence is EE.

This sequence belongs to the class VI-like SAM-binding methyltransferase superfamily. PEMT/PEM2 methyltransferase family. Post-translationally, isoform 2 is N-glycosylated with high-mannose oligosaccharides. Primarily expressed in liver (at protein level).

Its subcellular location is the endoplasmic reticulum. The protein resides in the endoplasmic reticulum membrane. The protein localises to the mitochondrion membrane. The catalysed reaction is a 1,2-diacyl-sn-glycero-3-phospho-N-methylethanolamine + S-adenosyl-L-methionine = a 1,2-diacyl-sn-glycero-3-phospho-N,N-dimethylethanolamine + S-adenosyl-L-homocysteine + H(+). The enzyme catalyses a 1,2-diacyl-sn-glycero-3-phospho-N,N-dimethylethanolamine + S-adenosyl-L-methionine = a 1,2-diacyl-sn-glycero-3-phosphocholine + S-adenosyl-L-homocysteine + H(+). It catalyses the reaction a 1,2-diacyl-sn-glycero-3-phosphoethanolamine + S-adenosyl-L-methionine = a 1,2-diacyl-sn-glycero-3-phospho-N-methylethanolamine + S-adenosyl-L-homocysteine + H(+). It carries out the reaction 1,2-di-(9Z-octadecenoyl)-sn-glycero-3-phosphoethanolamine + S-adenosyl-L-methionine = 1,2-di-(9Z-octadecenoyl)-sn-glycero-3-phospho-N-methylethanolamine + S-adenosyl-L-homocysteine + H(+). The catalysed reaction is 1,2-di-(9Z-octadecenoyl)-sn-glycero-3-phospho-N-methylethanolamine + S-adenosyl-L-methionine = 1,2-di-(9Z-octadecenoyl)-sn-glycero-3-phospho-N,N-dimethylethanolamine + S-adenosyl-L-homocysteine + H(+). The enzyme catalyses 1,2-di-(9Z-octadecenoyl)-sn-glycero-3-phospho-N,N-dimethylethanolamine + S-adenosyl-L-methionine = 1,2-di-(9Z-octadecenoyl)-sn-glycero-3-phosphocholine + S-adenosyl-L-homocysteine + H(+). It catalyses the reaction 1,2-di-(9Z,12Z-octadecadienoyl)-sn-glycero-3-phosphoethanolamine + S-adenosyl-L-methionine = 1,2-di-(9Z,12Z-octadecadienoyl)-sn-glycero-3-phospho-N-methylethanolamine + S-adenosyl-L-homocysteine + H(+). It carries out the reaction 1,2-di-(9Z,12Z-octadecadienoyl)-sn-glycero-3-phospho-N-methylethanolamine + S-adenosyl-L-methionine = 1,2-di-(9Z,12Z-octadecadienoyl)-sn-glycero-3-phospho-N,N-dimethylethanolamine + S-adenosyl-L-homocysteine + H(+). The catalysed reaction is 1,2-di-(9Z,12Z-octadecadienoyl)-sn-glycero-3-phospho-N,N-dimethylethanolamine + S-adenosyl-L-methionine = 1,2-di-(9Z,12Z-octadecadienoyl)-sn-glycero-3-phosphocholine + S-adenosyl-L-homocysteine + H(+). The enzyme catalyses 1,2-di-(9Z,12Z,15Z-octadecatrienoyl)-sn-glycero-3-phosphoethanolamine + S-adenosyl-L-methionine = 1,2-di-(9Z,12Z,15Z-octadecatrienoyl)-sn-glycero-3-phospho-N-methylethanolamine + S-adenosyl-L-homocysteine + H(+). It catalyses the reaction 1,2-di-(9Z,12Z,15Z-octadecatrienoyl)-sn-glycero-3-phospho-N-methylethanolamine + S-adenosyl-L-methionine = 1,2-di-(9Z,12Z,15Z-octadecatrienoyl)-sn-glycero-3-phospho-N,N-dimethylethanolamine + S-adenosyl-L-homocysteine + H(+). It carries out the reaction 1,2-di-(9Z,12Z,15Z-octadecatrienoyl)-sn-glycero-3-phospho-N,N-dimethylethanolamine + S-adenosyl-L-methionine = 1,2-di-(9Z,12Z,15Z-octadecatrienoyl)-sn-glycero-3-phosphocholine + S-adenosyl-L-homocysteine + H(+). The catalysed reaction is 1-hexadecanoyl-2-(4Z,7Z,10Z,13Z,16Z,19Z-docosahexaenoyl)-sn-glycero-3-phosphoethanolamine + S-adenosyl-L-methionine = 1-hexadecanoyl-2-(4Z,7Z,10Z,13Z,16Z,19Z-docosahexaenoyl)-sn-glycero-3-phospho-N-methylethanolamine + S-adenosyl-L-homocysteine + H(+). The enzyme catalyses 1-hexadecanoyl-2-(4Z,7Z,10Z,13Z,16Z,19Z-docosahexaenoyl)-sn-glycero-3-phospho-N-methylethanolamine + S-adenosyl-L-methionine = 1-hexadecanoyl-2-(4Z,7Z,10Z,13Z,16Z,19Z-docosahexaenoyl)-sn-glycero-3-phospho-N,N-dimethylethanolamine + S-adenosyl-L-homocysteine + H(+). It catalyses the reaction 1-hexadecanoyl-2-(4Z,7Z,10Z,13Z,16Z,19Z-docosahexaenoyl)-sn-glycero-3-phospho-N,N-dimethylethanolamine + S-adenosyl-L-methionine = 1-hexadecanoyl-2-(4Z,7Z,10Z,13Z,16Z,19Z-docosahexaenoyl)-sn-glycero-3-phosphocholine + S-adenosyl-L-homocysteine + H(+). It participates in phospholipid metabolism; phosphatidylcholine biosynthesis. Its activity is regulated as follows. The first methylation is rate-limiting. Functionally, catalyzes the three sequential steps of the methylation pathway for the biosynthesis of phosphatidylcholine, a critical and essential component for membrane structure. Uses S-adenosylmethionine (S-adenosyl-L-methionine, SAM or AdoMet) as the methyl group donor for the methylation of phosphatidylethanolamine (1,2-diacyl-sn-glycero-3-phosphoethanolamine, PE) to phosphatidylmonomethylethanolamine (1,2-diacyl-sn-glycero-3-phospho-N-methylethanolamine, PMME), PMME to phosphatidyldimethylethanolamine (1,2-diacyl-sn-glycero-3-phospho-N,N-dimethylethanolamine, PDME), and PDME to phosphatidylcholine (1,2-diacyl-sn-glycero-3-phosphocholine, PC), producing S-adenosyl-L-homocysteine in each step. Responsible for approximately 30% of hepatic PC with the CDP-choline pathway accounting for the other 70%. Its function is as follows. Catalyzes the three sequential steps of the methylation of 1,2-diacyl-sn-glycero-3-phospho-N-methylethanolamine (PMME) to 1,2-diacyl-sn-glycero-3-phospho-N,N-dimethylethanolamine (PDME) more efficiently than isoform 2. Induces increase in PC species with longer polyunsaturated chains than isoform 2. Produces a higher increase in the level of PC species containing long chains with three double bonds than isoform 1. The polypeptide is Phosphatidylethanolamine N-methyltransferase (Homo sapiens (Human)).